A 388-amino-acid polypeptide reads, in one-letter code: MSKKEETIFFRIEKENRPESSKKEEDENSTEEMTTLNHASVTLDHSAFAIADKDGFKMYQLNPLHFRMYKDYVIKVGPVRLVKQDGNSRRIIYVSALAGGRFAQNNLMIFDVARNEEYFEITTPSRYGPITNIHVSPNRLVALNPNRMFVWTYPDDIKQIRSEDIRSNPKGISAMSYDPTTAACYLAYPGFKTGSVQIMHLNALTARESKSPIVIEAHLTDIAQVALNCQGTLVATGSTKGTVIRVFDARTKGPLYELRRGTVQAHLQCMAFSPCSSYLAVASDKGTLHMFGIRDAEPQKKKNVLERSRGSSSIVKIQLDRPVMAIGFGKIPETPKNLQSIIAICADATYWRHEFYKDNTGNFTSHFGSYDELIEVANDSSFFRTPVE.

Basic and acidic residues predominate over residues 1–25; that stretch reads MSKKEETIFFRIEKENRPESSKKEE. The interval 1–33 is disordered; that stretch reads MSKKEETIFFRIEKENRPESSKKEEDENSTEEM. A WD 1 repeat occupies 217–257; that stretch reads AHLTDIAQVALNCQGTLVATGSTKGTVIRVFDARTKGPLYE. Positions 258 to 261 match the LRRG motif motif; the sequence is LRRG. A WD 2 repeat occupies 262–301; that stretch reads TVQAHLQCMAFSPCSSYLAVASDKGTLHMFGIRDAEPQKK. Positions 265–328 are required for atg-2 binding; it reads AHLQCMAFSP…LDRPVMAIGF (64 aa).

Belongs to the WD repeat PROPPIN family. As to quaternary structure, interacts with atg-2; the interaction is direct. As to expression, widely expressed in tissues including pharyngeal, muscle and neuronal tissues.

It is found in the cytoplasm. Its subcellular location is the preautophagosomal structure membrane. Component of the epg-6/atg-2 complex, which is involved in the generation of autophagosomes from omegasomes and in the distribution of atg-9 and atg-13 during the autophagy-mediated degradation of protein aggregates. Binds to phosphatidylinositols on preautophagosomes, which are early autophagic structures, to promote autophagosome formation. In particular, binds with high affinity to phosphatidylinositols including phosphatidylinositol 3-phosphate (PtdIns(3)P) and phosphatidylinositol 5-phosphate (PtdIns(5)P), but more weakly to phosphatidylinositol 4-phosphate (PtdIns(4)P) and phosphatidylinositol 3,5-bisphosphate (PtdIns(3,5)P2). Involved in autophagy-mediated degradation of ribosomal RNA and ribosomal proteins in lysosomes, which is essential for maintaining nucleotide homeostasis. This Caenorhabditis elegans protein is Ectopic P granules protein 6.